A 331-amino-acid chain; its full sequence is Tetraacyldisaccharide 4'-kinase (331 aa).

59–66 (FVGGTGKT) provides a ligand contact to ATP.

Belongs to the LpxK family.

It carries out the reaction a lipid A disaccharide + ATP = a lipid IVA + ADP + H(+). The protein operates within glycolipid biosynthesis; lipid IV(A) biosynthesis; lipid IV(A) from (3R)-3-hydroxytetradecanoyl-[acyl-carrier-protein] and UDP-N-acetyl-alpha-D-glucosamine: step 6/6. Functionally, transfers the gamma-phosphate of ATP to the 4'-position of a tetraacyldisaccharide 1-phosphate intermediate (termed DS-1-P) to form tetraacyldisaccharide 1,4'-bis-phosphate (lipid IVA). The protein is Tetraacyldisaccharide 4'-kinase of Alkalilimnicola ehrlichii (strain ATCC BAA-1101 / DSM 17681 / MLHE-1).